The primary structure comprises 212 residues: Hydroxyacylglutathione hydrolase GloC (212 aa).

Zn(2+)-binding residues include histidine 55, histidine 57, aspartate 59, histidine 60, histidine 132, aspartate 151, and histidine 192.

The protein belongs to the metallo-beta-lactamase superfamily. Glyoxalase II family. The cofactor is Zn(2+).

It carries out the reaction an S-(2-hydroxyacyl)glutathione + H2O = a 2-hydroxy carboxylate + glutathione + H(+). The enzyme catalyses (R)-S-lactoylglutathione + H2O = (R)-lactate + glutathione + H(+). It functions in the pathway secondary metabolite metabolism; methylglyoxal degradation; (R)-lactate from methylglyoxal: step 2/2. Functionally, type II glyoxalase, isozyme of GloB, that hydrolyzes (R)-S-lactoylglutathione to (R)-lactate and glutathione. Plays a role in methylglyoxal (MG) detoxification. The sequence is that of Hydroxyacylglutathione hydrolase GloC from Haemophilus influenzae (strain ATCC 51907 / DSM 11121 / KW20 / Rd).